The primary structure comprises 138 residues: Acidic phospholipase A2 Cvv-E6a (138 aa).

The N-terminal stretch at 1–16 (MRTLWIVAVLLLGVEG) is a signal peptide. Cystine bridges form between cysteine 42/cysteine 131, cysteine 44/cysteine 60, cysteine 59/cysteine 111, cysteine 65/cysteine 138, cysteine 66/cysteine 104, cysteine 73/cysteine 97, and cysteine 91/cysteine 102. Ca(2+) contacts are provided by tyrosine 43, glycine 45, and glycine 47. Histidine 63 is a catalytic residue. Position 64 (aspartate 64) interacts with Ca(2+). The active site involves aspartate 105.

It belongs to the phospholipase A2 family. Group II subfamily. D49 sub-subfamily. The cofactor is Ca(2+). Expressed by the venom gland.

The protein localises to the secreted. The catalysed reaction is a 1,2-diacyl-sn-glycero-3-phosphocholine + H2O = a 1-acyl-sn-glycero-3-phosphocholine + a fatty acid + H(+). In terms of biological role, snake venom phospholipase A2 (PLA2) that significantly inhibits ADP-induced platelet aggregation in platelet-rich plasma of human, rabbit and guinea pig. PLA2 catalyzes the calcium-dependent hydrolysis of the 2-acyl groups in 3-sn-phosphoglycerides. This Crotalus viridis viridis (Prairie rattlesnake) protein is Acidic phospholipase A2 Cvv-E6a.